The chain runs to 453 residues: Tryptophan dimethylallyltransferase cnsF (453 aa).

L-tryptophan contacts are provided by residues 84–85 (IL) and glutamate 93. Positions 104, 190, and 192 each coordinate substrate. The L-tryptophan site is built by tyrosine 194 and arginine 248. Substrate contacts are provided by arginine 261, lysine 263, tyrosine 265, glutamine 347, and tyrosine 349.

This sequence belongs to the tryptophan dimethylallyltransferase family. As to quaternary structure, homodimer.

The catalysed reaction is L-tryptophan + dimethylallyl diphosphate = 4-(3-methylbut-2-enyl)-L-tryptophan + diphosphate. It functions in the pathway alkaloid biosynthesis. Tryptophan dimethylallyltransferase; part of the gene cluster that mediates the biosynthesis of communesins, a prominent class of indole alkaloids with great potential as pharmaceuticals. Communesins are biosynthesized by the coupling of tryptamine and aurantioclavine, two building blocks derived from L-tryptophan. The L-tryptophan decarboxylase cnsB converts L-tryptophan to tryptamine, whereas the tryptophan dimethylallyltransferase cnsF converts L-tryptophan to 4-dimethylallyl tryptophan which is further transformed to aurantioclavine by the aurantioclavine synthase cnsA, probably aided by the catalase cnsD. The cytochrome P450 monooxygenase cnsC catalyzes the heterodimeric coupling between the two different indole moieties, tryptamine and aurantioclavine, to construct vicinal quaternary stereocenters and yield the heptacyclic communesin scaffold. The O-methyltransferase cnsE then methylates the communesin scaffold to produce communesin K, the simplest characterized communesin that contains the heptacyclic core. The dioxygenase cnsJ converts communesin K into communesin I. Acylation to introduce the hexadienyl group at position N16 of communesin I by the acyltransferase cnsK leads to the production of communesin B. The hexadienyl group is produced by the highly reducing polyketide synthase cnsI, before being hydrolytically removed from cnsI by the serine hydrolase cnsH, converted into hexadienyl-CoA by the CoA ligase cnsG, and then transferred to communesin I by cnsK. Surprisingly, cnsK may also be a promiscuous acyltransferase that can tolerate a range of acyl groups, including acetyl-, propionyl-, and butyryl-CoA, which lead to communesins A, G and H respectively. The roles of the alpha-ketoglutarate-dependent dioxygenases cnsM and cnsP have still to be determined. In Penicillium expansum (Blue mold rot fungus), this protein is Tryptophan dimethylallyltransferase cnsF.